The chain runs to 871 residues: Alanine--tRNA ligase (871 aa).

4 residues coordinate Zn(2+): His590, His594, Cys694, and His698.

The protein belongs to the class-II aminoacyl-tRNA synthetase family. Requires Zn(2+) as cofactor.

It is found in the cytoplasm. It carries out the reaction tRNA(Ala) + L-alanine + ATP = L-alanyl-tRNA(Ala) + AMP + diphosphate. Its function is as follows. Catalyzes the attachment of alanine to tRNA(Ala) in a two-step reaction: alanine is first activated by ATP to form Ala-AMP and then transferred to the acceptor end of tRNA(Ala). Also edits incorrectly charged Ser-tRNA(Ala) and Gly-tRNA(Ala) via its editing domain. The chain is Alanine--tRNA ligase from Thermoplasma acidophilum (strain ATCC 25905 / DSM 1728 / JCM 9062 / NBRC 15155 / AMRC-C165).